Here is a 130-residue protein sequence, read N- to C-terminus: U-scoloptoxin(16)-Er4a (130 aa).

The N-terminal stretch at 1-26 (MNTVSVVQFLAVGCAVFVLYGRGVFA) is a signal peptide.

It belongs to the scoloptoxin-16 family. In terms of processing, contains 3 disulfide bonds. As to expression, expressed by the venom gland.

The protein resides in the secreted. In Ethmostigmus rubripes (Giant centipede), this protein is U-scoloptoxin(16)-Er4a.